A 436-amino-acid polypeptide reads, in one-letter code: MVNRSDLVVIGISVGLALGLLLALLLFFAIKWYYGRSHLRRCANEQNSPTLPVHTAKRGVVIPDDRANTESSQPPENGAPTQHQPWWNNHTKDLTVSASGIPRYNYKDIQKATQNFTTVLGQGSFGPVYKAVMPNGELAAAKVHGSNSSQGDREFQTEVSLLGRLHHRNLVNLTGYCVDKSHRMLIYEFMSNGSLENLLYGGEGMQVLNWEERLQIALDISHGIEYLHEGAVPPVIHRDLKSANILLDHSMRAKVADFGLSKEMVLDRMTSGLKGTHGYMDPTYISTNKYTMKSDIYSFGVIILELITAIHPQQNLMEYINLASMSPDGIDEILDQKLVGNASIEEVRLLAKIANRCVHKTPRKRPSIGEVTQFILKIKQSRSRGRRQDTMSSSFGVGYEEDLSRVMSRIKDQHVELGLLAGVKEENHQERNIATT.

Residues 7–34 (LVVIGISVGLALGLLLALLLFFAIKWYY) traverse the membrane as a helical segment. Residues 65 to 88 (DRANTESSQPPENGAPTQHQPWWN) form a disordered region. Over residues 69–88 (TESSQPPENGAPTQHQPWWN) the composition is skewed to polar residues. Residues 114–375 (QNFTTVLGQG…PSIGEVTQFI (262 aa)) enclose the Protein kinase domain. ATP-binding positions include 120–128 (LGQGSFGPV) and Lys142. At Tyr187 the chain carries Phosphotyrosine. Asp239 (proton acceptor) is an active-site residue. Phosphothreonine is present on Thr276. Phosphotyrosine is present on Tyr284.

The protein belongs to the protein kinase superfamily. Ser/Thr protein kinase family.

The protein resides in the cell membrane. The enzyme catalyses L-seryl-[protein] + ATP = O-phospho-L-seryl-[protein] + ADP + H(+). It carries out the reaction L-threonyl-[protein] + ATP = O-phospho-L-threonyl-[protein] + ADP + H(+). The polypeptide is Calcium/calmodulin-regulated receptor-like kinase 2 (Arabidopsis thaliana (Mouse-ear cress)).